The primary structure comprises 121 residues: Large ribosomal subunit protein uL22c (121 aa).

The protein belongs to the universal ribosomal protein uL22 family. As to quaternary structure, part of the 50S ribosomal subunit.

The protein resides in the plastid. It is found in the chloroplast. In terms of biological role, this protein binds specifically to 23S rRNA. Its function is as follows. The globular domain of the protein is located near the polypeptide exit tunnel on the outside of the subunit, while an extended beta-hairpin is found that lines the wall of the exit tunnel in the center of the 70S ribosome. The sequence is that of Large ribosomal subunit protein uL22c (rpl22) from Lemna minor (Common duckweed).